Consider the following 377-residue polypeptide: Phytanoyl-CoA hydroxylase-interacting protein-like (377 aa).

The Fibronectin type-III domain occupies 52-161; sequence VPQNIKISNI…EINEFCTADY (110 aa).

This sequence belongs to the PHYHIP family.

Its function is as follows. May play a role in the development of the central system. This chain is Phytanoyl-CoA hydroxylase-interacting protein-like (phyhipl), found in Danio rerio (Zebrafish).